The primary structure comprises 163 residues: Nucleotide-binding protein YajQ (163 aa).

The protein belongs to the YajQ family.

Nucleotide-binding protein. The sequence is that of Nucleotide-binding protein YajQ from Salmonella paratyphi A (strain ATCC 9150 / SARB42).